We begin with the raw amino-acid sequence, 74 residues long: Protein kish-B (74 aa).

The N-terminal stretch at 1–22 (MTNVYSLDGLLVFALLFVCTCA) is a signal peptide. Over 23 to 52 (YFRKVPRLRSWLLSEKKGVWGVFYKAAVIG) the chain is Extracellular. Residues 53–73 (SRLHLAVSISCIAMAFYVLFI) form a helical membrane-spanning segment. Position 74 (K74) is a topological domain, cytoplasmic.

This sequence belongs to the KISH family.

It localises to the golgi apparatus membrane. In terms of biological role, involved in the early part of the secretory pathway. This chain is Protein kish-B (tmem167b), found in Xenopus laevis (African clawed frog).